The sequence spans 392 residues: Succinate--CoA ligase [ADP-forming] subunit beta (392 aa).

Residues 9–247 (KEILRVCGVP…LYEEDPKEIE (239 aa)) form the ATP-grasp domain. ATP contacts are provided by residues lysine 49, 56 to 58 (GRG), glutamate 102, glutamine 105, and glutamate 110. Mg(2+)-binding residues include asparagine 202 and aspartate 216. Substrate-binding positions include asparagine 267 and 324–326 (GIM).

The protein belongs to the succinate/malate CoA ligase beta subunit family. In terms of assembly, heterotetramer of two alpha and two beta subunits. The cofactor is Mg(2+).

The enzyme catalyses succinate + ATP + CoA = succinyl-CoA + ADP + phosphate. It catalyses the reaction GTP + succinate + CoA = succinyl-CoA + GDP + phosphate. It participates in carbohydrate metabolism; tricarboxylic acid cycle; succinate from succinyl-CoA (ligase route): step 1/1. Its function is as follows. Succinyl-CoA synthetase functions in the citric acid cycle (TCA), coupling the hydrolysis of succinyl-CoA to the synthesis of either ATP or GTP and thus represents the only step of substrate-level phosphorylation in the TCA. The beta subunit provides nucleotide specificity of the enzyme and binds the substrate succinate, while the binding sites for coenzyme A and phosphate are found in the alpha subunit. The protein is Succinate--CoA ligase [ADP-forming] subunit beta of Neorickettsia sennetsu (strain ATCC VR-367 / Miyayama) (Ehrlichia sennetsu).